A 158-amino-acid chain; its full sequence is 2-C-methyl-D-erythritol 2,4-cyclodiphosphate synthase (158 aa).

Residues Asp-9 and His-11 each coordinate a divalent metal cation. 4-CDP-2-C-methyl-D-erythritol 2-phosphate is bound by residues Asp-9–His-11 and His-35–Ser-36. Position 43 (His-43) interacts with a divalent metal cation. Residues Asp-57–Gly-59, Phe-62–Asp-66, Thr-133–Glu-136, Phe-140, and Arg-143 contribute to the 4-CDP-2-C-methyl-D-erythritol 2-phosphate site.

Belongs to the IspF family. Homotrimer. Requires a divalent metal cation as cofactor.

The catalysed reaction is 4-CDP-2-C-methyl-D-erythritol 2-phosphate = 2-C-methyl-D-erythritol 2,4-cyclic diphosphate + CMP. It participates in isoprenoid biosynthesis; isopentenyl diphosphate biosynthesis via DXP pathway; isopentenyl diphosphate from 1-deoxy-D-xylulose 5-phosphate: step 4/6. Involved in the biosynthesis of isopentenyl diphosphate (IPP) and dimethylallyl diphosphate (DMAPP), two major building blocks of isoprenoid compounds. Catalyzes the conversion of 4-diphosphocytidyl-2-C-methyl-D-erythritol 2-phosphate (CDP-ME2P) to 2-C-methyl-D-erythritol 2,4-cyclodiphosphate (ME-CPP) with a corresponding release of cytidine 5-monophosphate (CMP). The polypeptide is 2-C-methyl-D-erythritol 2,4-cyclodiphosphate synthase (Actinobacillus succinogenes (strain ATCC 55618 / DSM 22257 / CCUG 43843 / 130Z)).